The sequence spans 225 residues: ATP-dependent Clp protease proteolytic subunit (225 aa).

Catalysis depends on S101, which acts as the Nucleophile. Residue H126 is part of the active site.

It belongs to the peptidase S14 family. In terms of assembly, component of the chloroplastic Clp protease core complex.

The protein localises to the plastid. The protein resides in the chloroplast stroma. It carries out the reaction Hydrolysis of proteins to small peptides in the presence of ATP and magnesium. alpha-casein is the usual test substrate. In the absence of ATP, only oligopeptides shorter than five residues are hydrolyzed (such as succinyl-Leu-Tyr-|-NHMec, and Leu-Tyr-Leu-|-Tyr-Trp, in which cleavage of the -Tyr-|-Leu- and -Tyr-|-Trp bonds also occurs).. Its function is as follows. Cleaves peptides in various proteins in a process that requires ATP hydrolysis. Has a chymotrypsin-like activity. Plays a major role in the degradation of misfolded proteins. The polypeptide is ATP-dependent Clp protease proteolytic subunit (Chlorokybus atmophyticus (Soil alga)).